We begin with the raw amino-acid sequence, 515 residues long: Cytochrome P450 705A22 (515 aa).

Residues 9–29 traverse the membrane as a helical segment; that stretch reads FQNCFIFILIFLLTFLCFFFF. Cys-454 is a heme binding site.

Belongs to the cytochrome P450 family. Requires heme as cofactor.

The protein resides in the membrane. Its function is as follows. Plays a role in the gravitropic response of the inflorescence stems and roots. May affect the synthesis of flavonols that have a role in regulating auxin transport. The sequence is that of Cytochrome P450 705A22 from Arabidopsis thaliana (Mouse-ear cress).